A 685-amino-acid chain; its full sequence is Sulfate transporter 4.1, chloroplastic (685 aa).

The N-terminal 23 residues, 1 to 23 (MSYASLSVKDLTSLVSRSGTGSS), are a transit peptide targeting the chloroplast. Positions 15-26 (VSRSGTGSSSSL) are enriched in low complexity. Positions 15 to 53 (VSRSGTGSSSSLKPPGQTRPVKVIPLQHPDTSNEARPPS) are disordered. A run of 12 helical transmembrane segments spans residues 97–117 (LDLMAGITVGIMLVPQAMSYA), 122–142 (LPPIYGLYSSFVPVFVYAIFG), 147–167 (LAIGPVALVSLLVSNALGGIA), 175–195 (IELAILLALLVGILECIMGLL), 203–223 (FISHSVISGFTSASAIVIGLS), 255–275 (WPPFVMGSLILVILQVMKHVG), 283–303 (FLRAAAPLTGIVLGTTIAKVF), 332–352 (TLLPTSALITGVAILESVGIA), 369–389 (LFGLGVANILGSLFSAYPATG), 406–426 (LSGLITGIIIGCSLLFLTPMF), 434–454 (LAAIVISAVSGLVDYDEAIFL), and 473–493 (LFFGIEIGVLVGVGFSLAFVI). Residues 518–642 (QYPEAYTYNG…VRVHDAVQVC (125 aa)) enclose the STAS domain.

This sequence belongs to the SLC26A/SulP transporter (TC 2.A.53) family. In terms of tissue distribution, expressed both in roots and leaves.

The protein resides in the plastid. It localises to the chloroplast membrane. In terms of biological role, h(+)/sulfate cotransporter that may play a role in the regulation of sulfate assimilation. The chain is Sulfate transporter 4.1, chloroplastic (SULTR4;1) from Arabidopsis thaliana (Mouse-ear cress).